The following is a 241-amino-acid chain: MAPK phosphothreonine lyase (241 aa).

The active-site Proton donor is His106. Lys136 acts as the Proton acceptor in catalysis.

This sequence belongs to the phosphothreonine lyase family.

It is found in the secreted. In terms of biological role, secreted effector that irreversibly inactivates host MAP kinases by catalyzing the dephosphorylation of the phosphothreonine residue in the pT-X-pY motif present in MAPKs, via a beta-elimination reaction leading to a dehydrobutyrine residue. This chain is MAPK phosphothreonine lyase (spvC), found in Salmonella enteritidis.